A 29-amino-acid polypeptide reads, in one-letter code: GWTLNSAGYLLGPHAIDNHRSFNEKHGIA.

An Alanine amide modification is found at Ala-29.

The protein belongs to the galanin family.

It localises to the secreted. In terms of biological role, contracts smooth muscle of the gastrointestinal and genitourinary tract, regulates growth hormone release, modulates insulin release, and may be involved in the control of adrenal secretion. This is Galanin (GAL) from Alligator mississippiensis (American alligator).